The sequence spans 86 residues: Colicin-E2 immunity protein (86 aa).

The protein belongs to the colicins ColE2/ColE8/ColE9 and pyocins S1/S2 family.

This protein is able to protect a cell, which harbors the plasmid ColE2 encoding colicin E2, against colicin E2. This Escherichia coli protein is Colicin-E2 immunity protein (imm).